A 647-amino-acid polypeptide reads, in one-letter code: Homologous recombination OB-fold protein (647 aa).

S47 bears the Phosphoserine mark. Disordered regions lie at residues 284–361, 380–399, and 581–631; these read ARGT…GPQG, SRTPQQPTHPSTRAKTRRFP, and SFLK…DDLD. R285, R295, R329, and R337 each carry asymmetric dimethylarginine. Residues 287-308 show a composition bias toward polar residues; the sequence is TIQSSPQNRFPCQPFQSPSSWL. Residues 319–332 are compositionally biased toward low complexity; it reads TPNSSCSTPSRTSS. Residues 380–390 show a composition bias toward polar residues; the sequence is SRTPQQPTHPS. Residues 618–631 are compositionally biased toward acidic residues; it reads ASPEEELPEADDLD.

As to quaternary structure, interacts with MCM8; this interaction is necessary for MCM8-MCM9 helicase complex recruitment to DNA damage sites. Interacts with RPA1; this interaction associates HROB with the RPA complex.

It is found in the nucleus. Its subcellular location is the chromosome. Functionally, DNA-binding protein involved in homologous recombination that acts by recruiting the MCM8-MCM9 helicase complex to sites of DNA damage to promote DNA repair synthesis. The polypeptide is Homologous recombination OB-fold protein (Homo sapiens (Human)).